A 71-amino-acid polypeptide reads, in one-letter code: MELHGSLNMIGYGLAAIGSAIGVGLIFAAYINGVARQPEAQRILQPIALLGFALAEALAILGLVFAFVIGA.

2 consecutive transmembrane segments (helical) span residues 9–29 and 49–69; these read MIGY…IFAA and LLGF…AFVI.

This sequence belongs to the ATPase C chain family. As to quaternary structure, F-type ATPases have 2 components, F(1) - the catalytic core - and F(0) - the membrane proton channel. F(1) has five subunits: alpha(3), beta(3), gamma(1), delta(1), epsilon(1). F(0) has three main subunits: a(1), b(2) and c(10-14). The alpha and beta chains form an alternating ring which encloses part of the gamma chain. F(1) is attached to F(0) by a central stalk formed by the gamma and epsilon chains, while a peripheral stalk is formed by the delta and b chains.

The protein resides in the cell membrane. In terms of biological role, f(1)F(0) ATP synthase produces ATP from ADP in the presence of a proton or sodium gradient. F-type ATPases consist of two structural domains, F(1) containing the extramembraneous catalytic core and F(0) containing the membrane proton channel, linked together by a central stalk and a peripheral stalk. During catalysis, ATP synthesis in the catalytic domain of F(1) is coupled via a rotary mechanism of the central stalk subunits to proton translocation. Its function is as follows. Key component of the F(0) channel; it plays a direct role in translocation across the membrane. A homomeric c-ring of between 10-14 subunits forms the central stalk rotor element with the F(1) delta and epsilon subunits. This chain is ATP synthase subunit c, found in Micrococcus luteus (strain ATCC 4698 / DSM 20030 / JCM 1464 / CCM 169 / CCUG 5858 / IAM 1056 / NBRC 3333 / NCIMB 9278 / NCTC 2665 / VKM Ac-2230) (Micrococcus lysodeikticus).